A 297-amino-acid polypeptide reads, in one-letter code: E3 ubiquitin-protein ligase RNF212B (297 aa).

Residues Cys-6–Gly-40 form an RING-type zinc finger. The stretch at Leu-87–Gly-136 forms a coiled coil. 2 disordered regions span residues Val-152 to Ser-179 and Arg-198 to Pro-269. The segment covering Pro-163–Ser-179 has biased composition (low complexity). Residues Pro-206–Gly-234 show a composition bias toward polar residues.

In terms of assembly, homodimer. Autoubiquitinated.

It localises to the chromosome. The catalysed reaction is S-ubiquitinyl-[E2 ubiquitin-conjugating enzyme]-L-cysteine + [acceptor protein]-L-lysine = [E2 ubiquitin-conjugating enzyme]-L-cysteine + N(6)-ubiquitinyl-[acceptor protein]-L-lysine.. The protein operates within protein modification; protein ubiquitination. In terms of biological role, ubiquitin E3 ligase that acts as a crucial factor for crossing-over (CO) formation during meiosis. Essential for normal prophase I progression and for ensuring appropriate CO designation in meiosis. Recruits key components of the cross-over machinery either directly ou indirectly, leading to the activation of the MutL-gamma complex. The function of RNF212B in CO designation is dependent on its catalytic activity. The chain is E3 ubiquitin-protein ligase RNF212B (Rnf212b) from Mus musculus (Mouse).